Here is a 427-residue protein sequence, read N- to C-terminus: Histidine--tRNA ligase (427 aa).

This sequence belongs to the class-II aminoacyl-tRNA synthetase family. Homodimer.

It is found in the cytoplasm. It catalyses the reaction tRNA(His) + L-histidine + ATP = L-histidyl-tRNA(His) + AMP + diphosphate + H(+). This chain is Histidine--tRNA ligase, found in Lacticaseibacillus casei (strain BL23) (Lactobacillus casei).